Here is a 137-residue protein sequence, read N- to C-terminus: MVHLTTLLCKAYRGGHLTIRLALGGCTNRPFYRIVAAHNKCPRDGRFVEQLGSYDPLPNSHGEKLVALNLDRIRHWIGCGAHLSKPMEKLLGLAGFFPLHPMMITNAERLRRKRAREVLLASQKTDAEATDTEATET.

Residues Met-1–Ile-34 constitute a mitochondrion transit peptide. At Thr-130 the chain carries Phosphothreonine.

The protein belongs to the bacterial ribosomal protein bS16 family. Component of the mitochondrial small ribosomal subunit (mt-SSU). Mature mammalian 55S mitochondrial ribosomes consist of a small (28S) and a large (39S) subunit. The 28S small subunit contains a 12S ribosomal RNA (12S mt-rRNA) and 30 different proteins. The 39S large subunit contains a 16S rRNA (16S mt-rRNA), a copy of mitochondrial valine transfer RNA (mt-tRNA(Val)), which plays an integral structural role, and 52 different proteins. bS16m has a zinc binding site.

It is found in the mitochondrion. This chain is Small ribosomal subunit protein bS16m (MRPS16), found in Homo sapiens (Human).